The chain runs to 437 residues: Vacuolar protein sorting-associated protein 4A (437 aa).

The tract at residues 1 to 84 (MTTSTLQKAI…RSKEKHGKKP (84 aa)) is interaction with CHMP1B. An MIT domain is found at 2–80 (TTSTLQKAID…KDYLRSKEKH (79 aa)). K8 carries the post-translational modification N6-acetyllysine. Residues 75 to 106 (RSKEKHGKKPVKENQSEGKGSDSDSEGDNPEK) are disordered. The segment covering 84-96 (PVKENQSEGKGSD) has biased composition (basic and acidic residues). S95 and S97 each carry phosphoserine. 167–174 (GPPGTGKS) is a binding site for ATP.

This sequence belongs to the AAA ATPase family. As to quaternary structure, proposed to be monomeric or homodimeric in nucleotide-free form and to oligomerize upon binding to ATP to form two stacked hexameric or heptameric rings with a central pore through which ESCRT-III substrates are translocated in an ATP-dependent manner. Interacts with CHMP1A, CHMP1B, CHMP2A, CHMP2B, CHMP3, CHMP4A, CHMP4B, CHMP4C and CHMP6. Interacts with VPS4B; the interaction suggests a heteromeric assembly with VPS4B. Interacts with SPAST. Interacts with IST1. Interacts with ZFYVE19/ANCHR; leading to retain it at midbody. As to expression, ubiquitously expressed.

The protein resides in the late endosome membrane. It localises to the midbody. It is found in the cytoplasm. The protein localises to the cytoskeleton. Its subcellular location is the spindle. The enzyme catalyses ATP + H2O = ADP + phosphate + H(+). Functionally, involved in late steps of the endosomal multivesicular bodies (MVB) pathway. Recognizes membrane-associated ESCRT-III assemblies and catalyzes their disassembly, possibly in combination with membrane fission. Redistributes the ESCRT-III components to the cytoplasm for further rounds of MVB sorting. MVBs contain intraluminal vesicles (ILVs) that are generated by invagination and scission from the limiting membrane of the endosome and mostly are delivered to lysosomes enabling degradation of membrane proteins, such as stimulated growth factor receptors, lysosomal enzymes and lipids. It is required for proper accomplishment of various processes including the regulation of endosome size, primary cilium organization, mitotic spindle organization, chromosome segregation, and nuclear envelope sealing and spindle disassembly during anaphase. Involved in cytokinesis: retained at the midbody by ZFYVE19/ANCHR and CHMP4C until abscission checkpoint signaling is terminated at late cytokinesis. It is then released following dephosphorylation of CHMP4C, leading to abscission. VPS4A/B are required for the exosomal release of SDCBP, CD63 and syndecan. Critical for normal erythroblast cytokinesis and correct erythropoiesis. Its function is as follows. (Microbial infection) In conjunction with the ESCRT machinery also appears to function in topologically equivalent membrane fission events, such as the terminal stages of cytokinesis and enveloped virus budding (HIV-1 and other lentiviruses). This is Vacuolar protein sorting-associated protein 4A from Homo sapiens (Human).